A 329-amino-acid polypeptide reads, in one-letter code: Putative HTH-type transcriptional regulatory protein APE_0778 (329 aa).

Residues 142–200 (LREKRLEKGLSLGHLAYMLKTSRKSIYEYERGVMSPSVEKAEKLVDILGEEILEPIDIL) form the HTH cro/C1-type domain. A DNA-binding region (H-T-H motif) is located at residues 153 to 172 (LGHLAYMLKTSRKSIYEYER).

The sequence is that of Putative HTH-type transcriptional regulatory protein APE_0778 from Aeropyrum pernix (strain ATCC 700893 / DSM 11879 / JCM 9820 / NBRC 100138 / K1).